A 307-amino-acid chain; its full sequence is Membrane protein insertase YidC 1 (307 aa).

Residues 1–22 (MKSKKGLTLTITLGTLALFLSG) form the signal peptide. The N-palmitoyl cysteine moiety is linked to residue C23. C23 carries S-diacylglycerol cysteine lipidation. 5 helical membrane passes run 59 to 79 (YGWA…PMMI), 136 to 156 (GIGC…YYAI), 177 to 197 (LILA…SMIG), 205 to 225 (TMRL…MSAP), and 226 to 246 (AGLG…TLII). The segment at 260-307 (ELKKHPIKTPTPTQPKPINATESKPSHPRPQNNAGRGRNAGKQQRHHK) is disordered.

The protein belongs to the OXA1/ALB3/YidC family. Type 2 subfamily.

It localises to the cell membrane. Its function is as follows. Required for the insertion and/or proper folding and/or complex formation of integral membrane proteins into the membrane. Involved in integration of membrane proteins that insert both dependently and independently of the Sec translocase complex, as well as at least some lipoproteins. This is Membrane protein insertase YidC 1 from Lactiplantibacillus plantarum (strain ATCC BAA-793 / NCIMB 8826 / WCFS1) (Lactobacillus plantarum).